We begin with the raw amino-acid sequence, 158 residues long: Snaclec jerdonuxin subunit alpha (158 aa).

The signal sequence occupies residues 1–23 (MGRFTFVSFGLLVVFLSLSGTGA). Cystine bridges form between Cys27–Cys38, Cys55–Cys152, and Cys127–Cys144. The C-type lectin domain maps to 34–153 (YDRYCYQAFS…CGTENPFVCK (120 aa)).

It belongs to the snaclec family. In terms of assembly, tetramer of 4 heterodimers of alpha and beta subunits; disulfide-linked. Expressed by the venom gland.

Its subcellular location is the secreted. Snaclec that strongly induces platelet aggregation, in a dose-dependent manner. This chain is Snaclec jerdonuxin subunit alpha, found in Protobothrops jerdonii (Jerdon's pitviper).